The primary structure comprises 325 residues: Elongation factor P--(R)-beta-lysine ligase (325 aa).

76–78 (SPE) contributes to the substrate binding site. ATP-binding positions include 100 to 102 (RNE) and asparagine 109. Tyrosine 118 provides a ligand contact to substrate. 244–245 (EL) contributes to the ATP binding site. Glutamate 251 serves as a coordination point for substrate. Residue glycine 300 participates in ATP binding.

It belongs to the class-II aminoacyl-tRNA synthetase family. EpmA subfamily. As to quaternary structure, homodimer.

It carries out the reaction D-beta-lysine + L-lysyl-[protein] + ATP = N(6)-((3R)-3,6-diaminohexanoyl)-L-lysyl-[protein] + AMP + diphosphate + H(+). Functionally, with EpmB is involved in the beta-lysylation step of the post-translational modification of translation elongation factor P (EF-P) on 'Lys-34'. Catalyzes the ATP-dependent activation of (R)-beta-lysine produced by EpmB, forming a lysyl-adenylate, from which the beta-lysyl moiety is then transferred to the epsilon-amino group of EF-P 'Lys-34'. The protein is Elongation factor P--(R)-beta-lysine ligase of Salmonella gallinarum (strain 287/91 / NCTC 13346).